A 268-amino-acid chain; its full sequence is uncharacterized protein (268 aa).

A helical membrane pass occupies residues 150-172 (LYSIADFLAYTFTYFYLATVGLA).

It is found in the host membrane. This is an uncharacterized protein from Sulfolobus islandicus rod-shaped virus 1 (SIRV-1).